Consider the following 178-residue polypeptide: Thymidine kinase (178 aa).

Position 13-20 (13-20) interacts with ATP; the sequence is GPMFAGKS. Glu-85 functions as the Proton acceptor in the catalytic mechanism. Phe-115 contacts substrate. Zn(2+)-binding residues include Cys-140 and Cys-143. 159-163 serves as a coordination point for substrate; sequence IEIIG. Zn(2+)-binding residues include Cys-172 and Cys-175.

The protein belongs to the thymidine kinase family.

It carries out the reaction thymidine + ATP = dTMP + ADP + H(+). The polypeptide is Thymidine kinase (TK) (Myxoma virus (strain Lausanne) (MYXV)).